We begin with the raw amino-acid sequence, 282 residues long: Short-chain dehydrogenase/reductase prx7 (282 aa).

NADP(+)-binding residues include Asn23, Asn70, Tyr150, Lys154, Val183, and Thr185. The active-site Proton acceptor is Tyr150. The active-site Lowers pKa of active site Tyr is Lys154.

The protein belongs to the short-chain dehydrogenases/reductases (SDR) family.

It functions in the pathway sesquiterpene biosynthesis. Functionally, short-chain dehydrogenase/reductase; part of the gene cluster that mediates the biosynthesis of PR-toxin, a bicyclic sesquiterpene belonging to the eremophilane class and acting as a mycotoxin. The first step of the pathway is catalyzed by the aristolochene synthase which performs the cyclization of trans,trans-farnesyl diphosphate (FPP) to the bicyclic sesquiterpene aristolochene. Following the formation of aristolochene, the non-oxygenated aristolochene is converted to the trioxygenated intermediate eremofortin B, via 7-epi-neopetasone. This conversion appears to involve three enzymes, a hydroxysterol oxidase-like enzyme, the quinone-oxidase prx3 that forms the quinone-type-structure in the bicyclic nucleus of aristolochene with the C8-oxo group and the C-3 hydroxyl group, and the P450 monooxygenase prx9 that introduces the epoxide at the double bond between carbons 1 and 2. No monoxy or dioxy-intermediates have been reported to be released to the broth, so these three early oxidative reactions may be coupled together. Eremofortin B is further oxidized by another P450 monooxygenase, that introduces a second epoxide between carbons 7 and 11 prior to acetylation to eremofortin A by the acetyltransferase prx11. The second epoxidation may be performed by a second P450 monooxygenase. After the acetylation step, eremofortin A is converted to eremofortin C and then to PR-toxin. First the conversion of eremofortin A to eremofortin C proceeds by oxidation of the side chain of the molecule at C-12 and is catalyzed by the short-chain oxidoreductase prx1. The cytochrome P450 monooxygenase prx8 also plays a role in this step. The primary alcohol formed at C-12 is finally oxidized by the short-chain alcohol dehydrogenase prx4 that forms PR-toxin. The protein is Short-chain dehydrogenase/reductase prx7 of Penicillium rubens (strain ATCC 28089 / DSM 1075 / NRRL 1951 / Wisconsin 54-1255) (Penicillium chrysogenum).